The sequence spans 326 residues: Probable cell division protein WhiA (326 aa).

Positions 275–308 (SLEELGALADPPLTKDAIAGRIRRLLALADKRAR) form a DNA-binding region, H-T-H motif.

Belongs to the WhiA family.

In terms of biological role, involved in cell division and chromosome segregation. This Salinispora arenicola (strain CNS-205) protein is Probable cell division protein WhiA.